The following is a 396-amino-acid chain: Elongation factor Tu (396 aa).

The 195-residue stretch at 11–205 folds into the tr-type G domain; the sequence is KPHVNIGTIG…IVDEYIPTPE (195 aa). Residues 20 to 27 are G1; it reads GHVDHGKT. 20 to 27 is a GTP binding site; that stretch reads GHVDHGKT. Thr27 lines the Mg(2+) pocket. The segment at 61 to 65 is G2; that stretch reads GITIN. The segment at 82–85 is G3; that stretch reads DAPG. GTP contacts are provided by residues 82-86 and 137-140; these read DAPGH and NKCD. Residues 137–140 are G4; it reads NKCD. The G5 stretch occupies residues 175–177; sequence SAL.

It belongs to the TRAFAC class translation factor GTPase superfamily. Classic translation factor GTPase family. EF-Tu/EF-1A subfamily. Monomer.

The protein localises to the cytoplasm. The enzyme catalyses GTP + H2O = GDP + phosphate + H(+). Its function is as follows. GTP hydrolase that promotes the GTP-dependent binding of aminoacyl-tRNA to the A-site of ribosomes during protein biosynthesis. The chain is Elongation factor Tu from Lactobacillus acidophilus (strain ATCC 700396 / NCK56 / N2 / NCFM).